The following is a 330-amino-acid chain: Glycerol-3-phosphate dehydrogenase [NAD(P)+] (330 aa).

S10, W11, R31, and K105 together coordinate NADPH. The sn-glycerol 3-phosphate site is built by K105, G135, and S137. A139 is a binding site for NADPH. K190, D243, S253, R254, and N255 together coordinate sn-glycerol 3-phosphate. K190 (proton acceptor) is an active-site residue. R254 lines the NADPH pocket. NADPH is bound by residues V278 and E280.

The protein belongs to the NAD-dependent glycerol-3-phosphate dehydrogenase family.

It is found in the cytoplasm. It carries out the reaction sn-glycerol 3-phosphate + NAD(+) = dihydroxyacetone phosphate + NADH + H(+). It catalyses the reaction sn-glycerol 3-phosphate + NADP(+) = dihydroxyacetone phosphate + NADPH + H(+). It functions in the pathway membrane lipid metabolism; glycerophospholipid metabolism. Its function is as follows. Catalyzes the reduction of the glycolytic intermediate dihydroxyacetone phosphate (DHAP) to sn-glycerol 3-phosphate (G3P), the key precursor for phospholipid synthesis. The sequence is that of Glycerol-3-phosphate dehydrogenase [NAD(P)+] from Nitratidesulfovibrio vulgaris (strain ATCC 29579 / DSM 644 / CCUG 34227 / NCIMB 8303 / VKM B-1760 / Hildenborough) (Desulfovibrio vulgaris).